A 1293-amino-acid polypeptide reads, in one-letter code: Enterobactin synthase component F (1293 aa).

The segment at 1–301 (MSQHLPLVAA…NVLPLGIHIA (301 aa)) is elongation/condensation. The segment at 482–887 (SYREMREQVV…ALPDVEQAVT (406 aa)) is adenylatione. The Carrier domain occupies 971 to 1046 (APKAGSETII…KLATIIDAEE (76 aa)). Ser-1006 carries the O-(pantetheine 4'-phosphoryl)serine modification. A thioesterase region spans residues 1066–1293 (PTLFCFHPAS…GPIIRATLNR (228 aa)). His-1271 acts as the Proton acceptor; for thioesterase activity in catalysis.

Belongs to the ATP-dependent AMP-binding enzyme family. EntF subfamily. Proteins EntB, EntD, EntE and EntF are the component of the enterobactin synthase. Components probably do not form a stable complex. EntF acts as a catalytic monomer. Interacts with the MbtH-like protein YbdZ. YbdZ binds to the adenylation domain, but does not alter the structure of the domain. Requires pantetheine 4'-phosphate as cofactor. In terms of processing, 4'-phosphopantetheine is transferred from CoA to a specific serine of apo-EntF by EntD. Holo-EntF so formed is then acylated with seryl-AMP.

Its subcellular location is the cytoplasm. The enzyme catalyses 3 2,3-dihydroxybenzoate + 3 L-serine + 6 ATP = enterobactin + 6 AMP + 6 diphosphate + 4 H(+). The catalysed reaction is holo-[peptidyl-carrier protein] + L-serine + ATP = L-seryl-[peptidyl-carrier protein] + AMP + diphosphate. Its pathway is siderophore biosynthesis; enterobactin biosynthesis. Adenylation activity is increased in the presence of the MbtH-like protein YbdZ. In terms of biological role, involved in the biosynthesis of the siderophore enterobactin (enterochelin), which is a macrocyclic trimeric lactone of N-(2,3-dihydroxybenzoyl)-serine. EntF catalyzes the activation of L-serine via ATP-dependent PPi exchange reaction to form seryladenylate. Activated L-serine is loaded onto the peptidyl carrier domain via a thioester linkage to the phosphopanthetheine moiety, forming seryl-S-Ppant-EntF. EntF acts then as the sole catalyst for the formation of the three amide and three ester linkages found in enterobactin, using seryladenylate and 2,3-dihydroxybenzoate-S-Ppant-EntB (DHB-S-Ppant-EntB) as substrates, via the formation of a DHB-Ser-S-Ppant-EntF intermediate. The polypeptide is Enterobactin synthase component F (Escherichia coli (strain K12)).